Here is a 253-residue protein sequence, read N- to C-terminus: MTEPGETTHFGYRDVPLDEKQTLVNDVFHSVAGRYDLMNDLMSGGMHRLWKDVMITTLNPPRDDTPFRLLDVAGGTGDISFRAAKASGAGFHSTVCDINTDMLEVGRQRAVERNLDDKVDFVEGNAESLQFDDRSFDAYTIAFGIRNVPRIDLALKEAYRVLKPGSRFLCLEFSSVDVPGLSKLYDLFSFKVIPEIGRVVTGDADSYQYLVESIRKFPKPYDFAEMMRDAGFARANWQVMSGGIVALHSGWRL.

S-adenosyl-L-methionine is bound by residues threonine 76, aspartate 97, and 125–126; that span reads NA.

This sequence belongs to the class I-like SAM-binding methyltransferase superfamily. MenG/UbiE family.

The enzyme catalyses a 2-demethylmenaquinol + S-adenosyl-L-methionine = a menaquinol + S-adenosyl-L-homocysteine + H(+). It carries out the reaction a 2-methoxy-6-(all-trans-polyprenyl)benzene-1,4-diol + S-adenosyl-L-methionine = a 5-methoxy-2-methyl-3-(all-trans-polyprenyl)benzene-1,4-diol + S-adenosyl-L-homocysteine + H(+). The protein operates within quinol/quinone metabolism; menaquinone biosynthesis; menaquinol from 1,4-dihydroxy-2-naphthoate: step 2/2. Its pathway is cofactor biosynthesis; ubiquinone biosynthesis. Its function is as follows. Methyltransferase required for the conversion of demethylmenaquinol (DMKH2) to menaquinol (MKH2) and the conversion of 2-polyprenyl-6-methoxy-1,4-benzoquinol (DDMQH2) to 2-polyprenyl-3-methyl-6-methoxy-1,4-benzoquinol (DMQH2). The sequence is that of Ubiquinone/menaquinone biosynthesis C-methyltransferase UbiE from Rhodopseudomonas palustris (strain ATCC BAA-98 / CGA009).